The primary structure comprises 306 residues: Porphobilinogen deaminase (306 aa).

Cysteine 234 bears the S-(dipyrrolylmethanemethyl)cysteine mark.

It belongs to the HMBS family. As to quaternary structure, monomer. The cofactor is dipyrromethane.

The enzyme catalyses 4 porphobilinogen + H2O = hydroxymethylbilane + 4 NH4(+). The protein operates within porphyrin-containing compound metabolism; protoporphyrin-IX biosynthesis; coproporphyrinogen-III from 5-aminolevulinate: step 2/4. Functionally, tetrapolymerization of the monopyrrole PBG into the hydroxymethylbilane pre-uroporphyrinogen in several discrete steps. The protein is Porphobilinogen deaminase of Mycobacteroides abscessus (strain ATCC 19977 / DSM 44196 / CCUG 20993 / CIP 104536 / JCM 13569 / NCTC 13031 / TMC 1543 / L948) (Mycobacterium abscessus).